Consider the following 447-residue polypeptide: Serine/threonine-protein phosphatase 2A 55 kDa regulatory subunit B gamma isoform (447 aa).

WD repeat units lie at residues Thr22–Pro61, Glu87–Glu128, Gly171–Asn209, Asp220–Lys260, Glu279–Glu317, Glu334–Leu375, and Asp410–Met446.

The protein belongs to the phosphatase 2A regulatory subunit B family. In terms of assembly, PP2A consists of a common heterodimeric core enzyme, composed of a 36 kDa catalytic subunit (subunit C) and a 65 kDa constant regulatory subunit (PR65 or subunit A), that associates with a variety of regulatory subunits. Proteins that associate with the core dimer include three families of regulatory subunits B (the R2/B/PR55/B55, R3/B''/PR72/PR130/PR59 and R5/B'/B56 families), the 48 kDa variable regulatory subunit, viral proteins, and cell signaling molecules. Interacts with IER5.

In terms of biological role, the B regulatory subunit might modulate substrate selectivity and catalytic activity, and might also direct the localization of the catalytic enzyme to a particular subcellular compartment. In Mus musculus (Mouse), this protein is Serine/threonine-protein phosphatase 2A 55 kDa regulatory subunit B gamma isoform (Ppp2r2c).